The primary structure comprises 747 residues: Putative T-box protein 31 (747 aa).

A DNA-binding region (T-box) is located at residues 33-199 (QMLTKRKKTN…AGPAAKKTPD (167 aa)). Disordered regions lie at residues 268–289 (SLSSPAALKHDSTVSSDSDFDD) and 332–364 (SINNPGYLSTASSPAALNQDSSASEKSSIVRDK). Polar residues predominate over residues 332-358 (SINNPGYLSTASSPAALNQDSSASEKS).

The protein localises to the nucleus. This Caenorhabditis elegans protein is Putative T-box protein 31 (tbx-31).